Reading from the N-terminus, the 968-residue chain is RNA polymerase-associated protein RapA (968 aa).

The region spanning 163-332 (EVGRRYAPRV…FARLRLLDPD (170 aa)) is the Helicase ATP-binding domain. 176 to 183 (DEVGLGKT) lines the ATP pocket. Positions 278 to 281 (DEAH) match the DEAH box motif. Positions 491-643 (RVDWLIAFLK…ELTCPSGHVL (153 aa)) constitute a Helicase C-terminal domain.

This sequence belongs to the SNF2/RAD54 helicase family. RapA subfamily. In terms of assembly, interacts with the RNAP. Has a higher affinity for the core RNAP than for the holoenzyme. Its ATPase activity is stimulated by binding to RNAP.

In terms of biological role, transcription regulator that activates transcription by stimulating RNA polymerase (RNAP) recycling in case of stress conditions such as supercoiled DNA or high salt concentrations. Probably acts by releasing the RNAP, when it is trapped or immobilized on tightly supercoiled DNA. Does not activate transcription on linear DNA. Probably not involved in DNA repair. The chain is RNA polymerase-associated protein RapA from Shewanella putrefaciens (strain CN-32 / ATCC BAA-453).